Reading from the N-terminus, the 244-residue chain is 1-(5-phosphoribosyl)-5-[(5-phosphoribosylamino)methylideneamino] imidazole-4-carboxamide isomerase (244 aa).

Asp8 (proton acceptor) is an active-site residue. The active-site Proton donor is Asp129.

The protein belongs to the HisA/HisF family.

Its subcellular location is the cytoplasm. It carries out the reaction 1-(5-phospho-beta-D-ribosyl)-5-[(5-phospho-beta-D-ribosylamino)methylideneamino]imidazole-4-carboxamide = 5-[(5-phospho-1-deoxy-D-ribulos-1-ylimino)methylamino]-1-(5-phospho-beta-D-ribosyl)imidazole-4-carboxamide. It functions in the pathway amino-acid biosynthesis; L-histidine biosynthesis; L-histidine from 5-phospho-alpha-D-ribose 1-diphosphate: step 4/9. The protein is 1-(5-phosphoribosyl)-5-[(5-phosphoribosylamino)methylideneamino] imidazole-4-carboxamide isomerase of Thermodesulfovibrio yellowstonii (strain ATCC 51303 / DSM 11347 / YP87).